The chain runs to 263 residues: MRQSKKLGQCFLKDKNFVKKAINRAEITDKDIVLEVGLGEGALTKELAKLAKKVYVIELDERLKPFADEITSEFENVEIIWSDALKVDLKNLGFNKIVANLPYQISSPITFKFLEEDFETAVLMYQYEFAKRMAGKPDTKEYSRLSVAVQYNADVEFICKVPPSAFSPKPDVNSAIVKLTKRKPKYSVKDEKFFKKVLKALFQHRNRTIKRALIDSSHEIEIERDALKEILEKIESEFDFTERVFKTPPEKIGHLSNLLYDEL.

5 residues coordinate S-adenosyl-L-methionine: L12, G37, E58, D83, and N100.

It belongs to the class I-like SAM-binding methyltransferase superfamily. rRNA adenine N(6)-methyltransferase family. RsmA subfamily.

It localises to the cytoplasm. In terms of biological role, specifically dimethylates two adjacent adenosines in the loop of a conserved hairpin near the 3'-end of 16S rRNA in the 30S particle. May play a critical role in biogenesis of 30S subunits. The sequence is that of Probable ribosomal RNA small subunit methyltransferase A from Methanococcus maripaludis (strain C6 / ATCC BAA-1332).